The primary structure comprises 232 residues: tRNA1(Val) (adenine(37)-N6)-methyltransferase (232 aa).

It belongs to the methyltransferase superfamily. tRNA (adenine-N(6)-)-methyltransferase family.

The protein localises to the cytoplasm. The catalysed reaction is adenosine(37) in tRNA1(Val) + S-adenosyl-L-methionine = N(6)-methyladenosine(37) in tRNA1(Val) + S-adenosyl-L-homocysteine + H(+). Specifically methylates the adenine in position 37 of tRNA(1)(Val) (anticodon cmo5UAC). In Haemophilus influenzae (strain ATCC 51907 / DSM 11121 / KW20 / Rd), this protein is tRNA1(Val) (adenine(37)-N6)-methyltransferase.